The sequence spans 316 residues: Cuticle collagen 7 (316 aa).

Positions 1-34 (MSSATFLSVMAGLSGIVVFGALISVFHIYSDINS) are cleaved as a signal peptide. Disordered regions lie at residues 78–269 (KQSQ…DAAY) and 281–316 (HRNV…HVQA). Polar residues predominate over residues 79-90 (QSQCNCGQQASN). 3 triple-helical region regions span residues 94–126 (GPPG…AGPS), 139–198 (GLPG…PGKS), and 204–263 (GLPG…DGTP). Low complexity-rich tracts occupy residues 110 to 125 (QPGQ…VAGP), 137 to 147 (PQGLPGPAGVP), and 177 to 198 (AGSA…PGKS). The span at 209 to 221 (SGAPGPQGPPGAP) shows a compositional bias: pro residues. Low complexity predominate over residues 241–260 (PNGQPGHPGQDGQPGAPGND).

It belongs to the cuticular collagen family. Collagen polypeptide chains are complexed within the cuticle by disulfide bonds and other types of covalent cross-links.

Functionally, nematode cuticles are composed largely of collagen-like proteins. The cuticle functions both as an exoskeleton and as a barrier to protect the worm from its environment. This Caenorhabditis elegans protein is Cuticle collagen 7 (col-7).